We begin with the raw amino-acid sequence, 258 residues long: 5'-nucleotidase SurE (258 aa).

D8, D9, S40, and N92 together coordinate a divalent metal cation.

This sequence belongs to the SurE nucleotidase family. A divalent metal cation serves as cofactor.

It is found in the cytoplasm. The catalysed reaction is a ribonucleoside 5'-phosphate + H2O = a ribonucleoside + phosphate. In terms of biological role, nucleotidase that shows phosphatase activity on nucleoside 5'-monophosphates. The sequence is that of 5'-nucleotidase SurE from Brucella anthropi (strain ATCC 49188 / DSM 6882 / CCUG 24695 / JCM 21032 / LMG 3331 / NBRC 15819 / NCTC 12168 / Alc 37) (Ochrobactrum anthropi).